Here is a 282-residue protein sequence, read N- to C-terminus: 4-hydroxy-tetrahydrodipicolinate reductase (282 aa).

12–17 (GVTGRM) contributes to the NAD(+) binding site. An NADP(+)-binding site is contributed by Arg44. NAD(+) contacts are provided by residues 107–109 (GTT) and 131–134 (SSNF). The Proton donor/acceptor role is filled by His164. His165 is a (S)-2,3,4,5-tetrahydrodipicolinate binding site. Lys168 acts as the Proton donor in catalysis. Residue 174–175 (GT) participates in (S)-2,3,4,5-tetrahydrodipicolinate binding.

The protein belongs to the DapB family. As to quaternary structure, homotetramer.

The protein resides in the cytoplasm. It carries out the reaction (S)-2,3,4,5-tetrahydrodipicolinate + NAD(+) + H2O = (2S,4S)-4-hydroxy-2,3,4,5-tetrahydrodipicolinate + NADH + H(+). The catalysed reaction is (S)-2,3,4,5-tetrahydrodipicolinate + NADP(+) + H2O = (2S,4S)-4-hydroxy-2,3,4,5-tetrahydrodipicolinate + NADPH + H(+). It functions in the pathway amino-acid biosynthesis; L-lysine biosynthesis via DAP pathway; (S)-tetrahydrodipicolinate from L-aspartate: step 4/4. Catalyzes the conversion of 4-hydroxy-tetrahydrodipicolinate (HTPA) to tetrahydrodipicolinate. This Blochmanniella pennsylvanica (strain BPEN) protein is 4-hydroxy-tetrahydrodipicolinate reductase.